The sequence spans 842 residues: Elongation factor 2 (842 aa).

Residues 17-253 (TNVRNMSVIA…LWGDSYFNPK (237 aa)) enclose the tr-type G domain. Residues 26 to 33 (AHVDHGKS), 158 to 161 (NKVD), and 213 to 215 (SGL) contribute to the GTP site. His699 is modified (diphthamide).

Belongs to the TRAFAC class translation factor GTPase superfamily. Classic translation factor GTPase family. EF-G/EF-2 subfamily.

The protein resides in the cytoplasm. The catalysed reaction is GTP + H2O = GDP + phosphate + H(+). Its function is as follows. Catalyzes the GTP-dependent ribosomal translocation step during translation elongation. During this step, the ribosome changes from the pre-translocational (PRE) to the post-translocational (POST) state as the newly formed A-site-bound peptidyl-tRNA and P-site-bound deacylated tRNA move to the P and E sites, respectively. Catalyzes the coordinated movement of the two tRNA molecules, the mRNA and conformational changes in the ribosome. The sequence is that of Elongation factor 2 (EFT1) from Kluyveromyces lactis (strain ATCC 8585 / CBS 2359 / DSM 70799 / NBRC 1267 / NRRL Y-1140 / WM37) (Yeast).